Here is a 164-residue protein sequence, read N- to C-terminus: Peptide methionine sulfoxide reductase MsrA (164 aa).

Cys16 is a catalytic residue.

The protein belongs to the MsrA Met sulfoxide reductase family.

The enzyme catalyses L-methionyl-[protein] + [thioredoxin]-disulfide + H2O = L-methionyl-(S)-S-oxide-[protein] + [thioredoxin]-dithiol. The catalysed reaction is [thioredoxin]-disulfide + L-methionine + H2O = L-methionine (S)-S-oxide + [thioredoxin]-dithiol. In terms of biological role, has an important function as a repair enzyme for proteins that have been inactivated by oxidation. Catalyzes the reversible oxidation-reduction of methionine sulfoxide in proteins to methionine. The protein is Peptide methionine sulfoxide reductase MsrA of Methanoculleus marisnigri (strain ATCC 35101 / DSM 1498 / JR1).